The following is a 343-amino-acid chain: S-adenosylmethionine:tRNA ribosyltransferase-isomerase (343 aa).

Belongs to the QueA family. As to quaternary structure, monomer.

The protein localises to the cytoplasm. It catalyses the reaction 7-aminomethyl-7-carbaguanosine(34) in tRNA + S-adenosyl-L-methionine = epoxyqueuosine(34) in tRNA + adenine + L-methionine + 2 H(+). It participates in tRNA modification; tRNA-queuosine biosynthesis. In terms of biological role, transfers and isomerizes the ribose moiety from AdoMet to the 7-aminomethyl group of 7-deazaguanine (preQ1-tRNA) to give epoxyqueuosine (oQ-tRNA). The protein is S-adenosylmethionine:tRNA ribosyltransferase-isomerase of Latilactobacillus sakei subsp. sakei (strain 23K) (Lactobacillus sakei subsp. sakei).